The following is a 275-amino-acid chain: Undecaprenyl-diphosphatase 2 (275 aa).

Transmembrane regions (helical) follow at residues 48 to 68 (NAYV…ALLF), 90 to 110 (GLTL…GLLF), 117 to 137 (IFHV…MIAA), 154 to 174 (ISYK…WPGF), 195 to 215 (ANFT…LSLI), 223 to 243 (ISLL…SLVV), and 254 to 274 (IKLV…LFLF).

Belongs to the UppP family.

It is found in the cell membrane. It carries out the reaction di-trans,octa-cis-undecaprenyl diphosphate + H2O = di-trans,octa-cis-undecaprenyl phosphate + phosphate + H(+). Functionally, catalyzes the dephosphorylation of undecaprenyl diphosphate (UPP). Confers resistance to bacitracin. This is Undecaprenyl-diphosphatase 2 from Shouchella clausii (strain KSM-K16) (Alkalihalobacillus clausii).